Consider the following 273-residue polypeptide: 3-methyl-2-oxobutanoate hydroxymethyltransferase 2 (273 aa).

2 residues coordinate Mg(2+): Asp-50 and Asp-89. Residues 50 to 51, Asp-89, and Lys-119 each bind 3-methyl-2-oxobutanoate; that span reads DS. Glu-121 contacts Mg(2+). Catalysis depends on Glu-188, which acts as the Proton acceptor.

Belongs to the PanB family. In terms of assembly, homodecamer; pentamer of dimers. The cofactor is Mg(2+).

It localises to the cytoplasm. The catalysed reaction is 3-methyl-2-oxobutanoate + (6R)-5,10-methylene-5,6,7,8-tetrahydrofolate + H2O = 2-dehydropantoate + (6S)-5,6,7,8-tetrahydrofolate. The protein operates within cofactor biosynthesis; (R)-pantothenate biosynthesis; (R)-pantoate from 3-methyl-2-oxobutanoate: step 1/2. Its function is as follows. Catalyzes the reversible reaction in which hydroxymethyl group from 5,10-methylenetetrahydrofolate is transferred onto alpha-ketoisovalerate to form ketopantoate. This chain is 3-methyl-2-oxobutanoate hydroxymethyltransferase 2, found in Zymomonas mobilis subsp. mobilis (strain ATCC 31821 / ZM4 / CP4).